The primary structure comprises 339 residues: Ketol-acid reductoisomerase (NADP(+)) (339 aa).

The KARI N-terminal Rossmann domain maps to 1–182; that stretch reads MRVYYDRDAD…GGGRSGVIET (182 aa). NADP(+) is bound by residues 24-27, arginine 48, serine 51, threonine 53, and 83-86; these read YGSQ and DELQ. Histidine 108 is a catalytic residue. Glycine 134 contributes to the NADP(+) binding site. A KARI C-terminal knotted domain is found at 183–328; sequence NFREECETDL…GRLRAMMPWI (146 aa). Mg(2+) is bound by residues aspartate 191, glutamate 195, glutamate 227, and glutamate 231. Residue serine 252 coordinates substrate.

This sequence belongs to the ketol-acid reductoisomerase family. It depends on Mg(2+) as a cofactor.

The catalysed reaction is (2R)-2,3-dihydroxy-3-methylbutanoate + NADP(+) = (2S)-2-acetolactate + NADPH + H(+). It carries out the reaction (2R,3R)-2,3-dihydroxy-3-methylpentanoate + NADP(+) = (S)-2-ethyl-2-hydroxy-3-oxobutanoate + NADPH + H(+). Its pathway is amino-acid biosynthesis; L-isoleucine biosynthesis; L-isoleucine from 2-oxobutanoate: step 2/4. The protein operates within amino-acid biosynthesis; L-valine biosynthesis; L-valine from pyruvate: step 2/4. Its function is as follows. Involved in the biosynthesis of branched-chain amino acids (BCAA). Catalyzes an alkyl-migration followed by a ketol-acid reduction of (S)-2-acetolactate (S2AL) to yield (R)-2,3-dihydroxy-isovalerate. In the isomerase reaction, S2AL is rearranged via a Mg-dependent methyl migration to produce 3-hydroxy-3-methyl-2-ketobutyrate (HMKB). In the reductase reaction, this 2-ketoacid undergoes a metal-dependent reduction by NADPH to yield (R)-2,3-dihydroxy-isovalerate. The protein is Ketol-acid reductoisomerase (NADP(+)) of Phenylobacterium zucineum (strain HLK1).